The primary structure comprises 378 residues: Beta sliding clamp (378 aa).

The protein belongs to the beta sliding clamp family. In terms of assembly, forms a ring-shaped head-to-tail homodimer around DNA which binds and tethers DNA polymerases and other proteins to the DNA. The DNA replisome complex has a single clamp-loading complex (3 tau and 1 each of delta, delta', psi and chi subunits) which binds 3 Pol III cores (1 core on the leading strand and 2 on the lagging strand) each with a beta sliding clamp dimer. Additional proteins in the replisome are other copies of gamma, psi and chi, Ssb, DNA helicase and RNA primase. Interacts with YabA, and via YabA, with DnaA. During sporulation probably interacts with SirA.

The protein resides in the cytoplasm. The protein localises to the nucleoid. Functionally, confers DNA tethering and processivity to DNA polymerases and other proteins. Acts as a clamp, forming a ring around DNA (a reaction catalyzed by the clamp-loading complex) which diffuses in an ATP-independent manner freely and bidirectionally along dsDNA. Initially characterized for its ability to contact the catalytic subunit of DNA polymerase III (Pol III), a complex, multichain enzyme responsible for most of the replicative synthesis in bacteria; Pol III exhibits 3'-5' exonuclease proofreading activity. The beta chain is required for initiation of replication as well as for processivity of DNA replication. Overexpression in vivo stimulates inititation of DNA replication from oriC. Increased levels of DnaN remove YabA from its association with DnaA on the chromosome, allowing DnaA to bind to its targets. Its interaction with DnaA probably serves as a sink to prevent excessive replication initiation. In Bacillus subtilis (strain 168), this protein is Beta sliding clamp.